The primary structure comprises 82 residues: Neuromacin (82 aa).

A signal peptide spans 1–23 (MALLNKLLCFALVFMIFGEFVTP). 4 cysteine pairs are disulfide-bonded: C25/C32, C47/C51, C61/C69, and C79/C81.

It belongs to the macin family.

The protein resides in the secreted. This Hirudo medicinalis (Medicinal leech) protein is Neuromacin.